The following is a 395-amino-acid chain: Alanine racemase 2 (395 aa).

Residue Lys60 is the Proton acceptor; specific for D-alanine of the active site. An N6-(pyridoxal phosphate)lysine modification is found at Lys60. Arg158 is a binding site for substrate. Tyr288 (proton acceptor; specific for L-alanine) is an active-site residue. Residue Met332 participates in substrate binding.

It belongs to the alanine racemase family. Pyridoxal 5'-phosphate serves as cofactor.

The catalysed reaction is L-alanine = D-alanine. The protein operates within amino-acid biosynthesis; D-alanine biosynthesis; D-alanine from L-alanine: step 1/1. Its function is as follows. Catalyzes the interconversion of L-alanine and D-alanine. May also act on other amino acids. The sequence is that of Alanine racemase 2 (alr2) from Clostridium acetobutylicum (strain ATCC 824 / DSM 792 / JCM 1419 / IAM 19013 / LMG 5710 / NBRC 13948 / NRRL B-527 / VKM B-1787 / 2291 / W).